Reading from the N-terminus, the 224-residue chain is Oxaloacetate tautomerase FAHD2, mitochondrial (224 aa).

Residues 1–30 (MATSMIQRLFKQGTKIVGVGLNYASHAKEL) constitute a mitochondrion transit peptide. Positions 67, 69, and 98 each coordinate Mg(2+).

The protein belongs to the FAH family. Requires Mg(2+) as cofactor. Mn(2+) serves as cofactor.

The protein localises to the mitochondrion. It carries out the reaction oxaloacetate = enol-oxaloacetate. Its function is as follows. Tautomerase that converts enol-oxaloacetate, a strong inhibitor of succinate dehydrogenase, to the physiological keto form of oxaloacetate. This is Oxaloacetate tautomerase FAHD2, mitochondrial from Arabidopsis thaliana (Mouse-ear cress).